The sequence spans 290 residues: Sodium/potassium-transporting ATPase subunit beta-2 (290 aa).

Residues 1-39 lie on the Cytoplasmic side of the membrane; sequence MVIQKEKKSCGQVVEEWKEFVWNPRTHQFMGRTGTSWAF. Residues 40-67 form a helical; Signal-anchor for type II membrane protein membrane-spanning segment; it reads ILLFYLVFYGFLTAMFSLTMWVMLQTVS. The Extracellular portion of the chain corresponds to 68 to 290; it reads DHTPKYQDRL…VAFKLRINKT (223 aa). Asn-96 and Asn-118 each carry an N-linked (GlcNAc...) asparagine glycan. Cys-129 and Cys-150 are joined by a disulfide. Residue Asn-153 is glycosylated (N-linked (GlcNAc...) asparagine). Cys-160 and Cys-177 form a disulfide bridge. N-linked (GlcNAc...) asparagine glycosylation is found at Asn-193, Asn-197, Asn-220, and Asn-238. The immunoglobulin-like stretch occupies residues 193-290; that stretch reads NQSMNVTCVG…VAFKLRINKT (98 aa). A disulfide bond links Cys-200 and Cys-261.

This sequence belongs to the X(+)/potassium ATPases subunit beta family. The sodium/potassium-transporting ATPase is composed of a catalytic alpha subunit, an auxiliary non-catalytic beta subunit and an additional regulatory subunit. Interacts with isoform 2 of BSG.

The protein resides in the cell membrane. In terms of biological role, this is the non-catalytic component of the active enzyme, which catalyzes the hydrolysis of ATP coupled with the exchange of Na(+) and K(+) ions across the plasma membrane. The exact function of the beta-2 subunit is not known. Mediates cell adhesion of neurons and astrocytes, and promotes neurite outgrowth. The sequence is that of Sodium/potassium-transporting ATPase subunit beta-2 (Atp1b2) from Mus musculus (Mouse).